Here is a 257-residue protein sequence, read N- to C-terminus: Ribonuclease HII (257 aa).

An RNase H type-2 domain is found at 70–257 (EFIAGIDEVG…PIKSMVAGGN (188 aa)). Residues Asp-76, Glu-77, and Asp-168 each contribute to the a divalent metal cation site.

This sequence belongs to the RNase HII family. Requires Mn(2+) as cofactor. Mg(2+) is required as a cofactor.

It is found in the cytoplasm. It carries out the reaction Endonucleolytic cleavage to 5'-phosphomonoester.. Functionally, endonuclease that specifically degrades the RNA of RNA-DNA hybrids. This chain is Ribonuclease HII, found in Streptococcus suis (strain 98HAH33).